A 209-amino-acid chain; its full sequence is Dephospho-CoA kinase (209 aa).

The DPCK domain occupies 13–209 (RIGLTGGIAT…AIEKVVVAEN (197 aa)). 21 to 26 (ATGKST) contributes to the ATP binding site.

Belongs to the CoaE family.

It is found in the cytoplasm. The catalysed reaction is 3'-dephospho-CoA + ATP = ADP + CoA + H(+). Its pathway is cofactor biosynthesis; coenzyme A biosynthesis; CoA from (R)-pantothenate: step 5/5. Catalyzes the phosphorylation of the 3'-hydroxyl group of dephosphocoenzyme A to form coenzyme A. The sequence is that of Dephospho-CoA kinase from Synechococcus elongatus (strain ATCC 33912 / PCC 7942 / FACHB-805) (Anacystis nidulans R2).